Consider the following 923-residue polypeptide: RNA polymerase-associated protein RapA (923 aa).

In terms of domain architecture, Helicase ATP-binding spans 162 to 332 (EVGNRVNPRV…FARLRLLDPE (171 aa)). Residue 175-182 (DEVGLGKT) coordinates ATP. The DEAH box signature appears at 278–281 (DEAH). The Helicase C-terminal domain maps to 443–597 (KIDWLIDFLK…TCPMGMALFS (155 aa)).

This sequence belongs to the SNF2/RAD54 helicase family. RapA subfamily. As to quaternary structure, interacts with the RNAP. Has a higher affinity for the core RNAP than for the holoenzyme. Its ATPase activity is stimulated by binding to RNAP.

In terms of biological role, transcription regulator that activates transcription by stimulating RNA polymerase (RNAP) recycling in case of stress conditions such as supercoiled DNA or high salt concentrations. Probably acts by releasing the RNAP, when it is trapped or immobilized on tightly supercoiled DNA. Does not activate transcription on linear DNA. Probably not involved in DNA repair. The protein is RNA polymerase-associated protein RapA of Haemophilus influenzae (strain PittEE).